Here is a 130-residue protein sequence, read N- to C-terminus: Sulfurtransferase TusD (130 aa).

The active-site Cysteine persulfide intermediate is C78.

The protein belongs to the DsrE/TusD family. In terms of assembly, heterohexamer, formed by a dimer of trimers. The hexameric TusBCD complex contains 2 copies each of TusB, TusC and TusD. The TusBCD complex interacts with TusE.

Its subcellular location is the cytoplasm. In terms of biological role, part of a sulfur-relay system required for 2-thiolation of 5-methylaminomethyl-2-thiouridine (mnm(5)s(2)U) at tRNA wobble positions. Accepts sulfur from TusA and transfers it in turn to TusE. The protein is Sulfurtransferase TusD of Buchnera aphidicola subsp. Baizongia pistaciae (strain Bp).